A 259-amino-acid chain; its full sequence is Ribosomal RNA small subunit methyltransferase J (259 aa).

S-adenosyl-L-methionine contacts are provided by residues 101-102 (RD), 117-118 (ER), 153-154 (SS), and Asp176.

Belongs to the methyltransferase superfamily. RsmJ family.

Its subcellular location is the cytoplasm. It carries out the reaction guanosine(1516) in 16S rRNA + S-adenosyl-L-methionine = N(2)-methylguanosine(1516) in 16S rRNA + S-adenosyl-L-homocysteine + H(+). Functionally, specifically methylates the guanosine in position 1516 of 16S rRNA. In Vibrio parahaemolyticus serotype O3:K6 (strain RIMD 2210633), this protein is Ribosomal RNA small subunit methyltransferase J.